The chain runs to 213 residues: Adenylate kinase (213 aa).

An ATP-binding site is contributed by 10–15; the sequence is GAGKGT. The interval 30–59 is NMP; the sequence is STGNLLRDEVKSKTDLGVDIEKLISNGKFV. AMP is bound by residues Thr-31, Arg-36, 57 to 59, 85 to 88, and Gln-92; these read KFV and GYPR. Residues 126 to 162 form an LID region; sequence GRMTCEKCNMTLNEYFNKEQIELHPCGVEHLKKRKDD. Arg-127 contributes to the ATP binding site. AMP is bound by residues Arg-159 and Arg-170. An ATP-binding site is contributed by Gly-198.

This sequence belongs to the adenylate kinase family. In terms of assembly, monomer.

It localises to the cytoplasm. It catalyses the reaction AMP + ATP = 2 ADP. The protein operates within purine metabolism; AMP biosynthesis via salvage pathway; AMP from ADP: step 1/1. Functionally, catalyzes the reversible transfer of the terminal phosphate group between ATP and AMP. Plays an important role in cellular energy homeostasis and in adenine nucleotide metabolism. This chain is Adenylate kinase, found in Pelagibacter ubique (strain HTCC1062).